We begin with the raw amino-acid sequence, 241 residues long: DNA repair protein RecO (241 aa).

This sequence belongs to the RecO family.

Its function is as follows. Involved in DNA repair and RecF pathway recombination. The polypeptide is DNA repair protein RecO (Ruegeria sp. (strain TM1040) (Silicibacter sp.)).